We begin with the raw amino-acid sequence, 304 residues long: Tyrosine recombinase XerD (304 aa).

In terms of domain architecture, Core-binding (CB) spans Glu-6 to Leu-91. In terms of domain architecture, Tyr recombinase spans Tyr-112–Lys-298. Residues Arg-155, Lys-179, His-250, Arg-253, and His-276 contribute to the active site. Tyr-285 functions as the O-(3'-phospho-DNA)-tyrosine intermediate in the catalytic mechanism.

This sequence belongs to the 'phage' integrase family. XerD subfamily. In terms of assembly, forms a cyclic heterotetrameric complex composed of two molecules of XerC and two molecules of XerD.

The protein localises to the cytoplasm. Functionally, site-specific tyrosine recombinase, which acts by catalyzing the cutting and rejoining of the recombining DNA molecules. The XerC-XerD complex is essential to convert dimers of the bacterial chromosome into monomers to permit their segregation at cell division. It also contributes to the segregational stability of plasmids. This Chlorobaculum tepidum (strain ATCC 49652 / DSM 12025 / NBRC 103806 / TLS) (Chlorobium tepidum) protein is Tyrosine recombinase XerD.